A 173-amino-acid chain; its full sequence is Mesencephalic astrocyte-derived neurotrophic factor homolog (173 aa).

An N-terminal signal peptide occupies residues 1–22; the sequence is MKTWHMVVVIGFLATLAQTSLA. 4 cysteine pairs are disulfide-bonded: cysteine 28/cysteine 114, cysteine 31/cysteine 103, cysteine 61/cysteine 72, and cysteine 148/cysteine 151.

Belongs to the ARMET family.

Its subcellular location is the secreted. In terms of biological role, required during the maturation of the embryonic nervous system for maintenance of neuronal and cuticular connectivity. Essential for maintenance of dopaminergic neurons and dopamine levels. The polypeptide is Mesencephalic astrocyte-derived neurotrophic factor homolog (Drosophila sechellia (Fruit fly)).